Reading from the N-terminus, the 86-residue chain is Large ribosomal subunit protein bL27 (86 aa).

A compositionally biased stretch (gly residues) spans 1–10; sequence MAQKKGGGST. The tract at residues 1-21 is disordered; the sequence is MAQKKGGGSTRNGRDSESKRL.

The protein belongs to the bacterial ribosomal protein bL27 family.

The chain is Large ribosomal subunit protein bL27 from Ralstonia pickettii (strain 12J).